Consider the following 445-residue polypeptide: Probable glycine dehydrogenase (decarboxylating) subunit 1 (445 aa).

The protein belongs to the GcvP family. N-terminal subunit subfamily. The glycine cleavage system is composed of four proteins: P, T, L and H. In this organism, the P 'protein' is a heterodimer of two subunits.

The catalysed reaction is N(6)-[(R)-lipoyl]-L-lysyl-[glycine-cleavage complex H protein] + glycine + H(+) = N(6)-[(R)-S(8)-aminomethyldihydrolipoyl]-L-lysyl-[glycine-cleavage complex H protein] + CO2. In terms of biological role, the glycine cleavage system catalyzes the degradation of glycine. The P protein binds the alpha-amino group of glycine through its pyridoxal phosphate cofactor; CO(2) is released and the remaining methylamine moiety is then transferred to the lipoamide cofactor of the H protein. In Anaeromyxobacter sp. (strain Fw109-5), this protein is Probable glycine dehydrogenase (decarboxylating) subunit 1.